The primary structure comprises 898 residues: Endoplasmic reticulum metallopeptidase 1 (898 aa).

Met-1 carries the post-translational modification N-acetylmethionine. Residues 1-59 are disordered; sequence MEWSSESAAVRRHRGTAERREGQAAASHPQREASAQEDARGGGRMRGRTESGGESRGAK. At 1-66 the chain is on the cytoplasmic side; sequence MEWSSESAAV…GAKTALSEAR (66 aa). Residues 37–57 show a composition bias toward basic and acidic residues; it reads EDARGGGRMRGRTESGGESRG. The chain crosses the membrane as a helical span at residues 67–87; that stretch reads TALALALYLLALRALVQLSLQ. The Lumenal segment spans residues 88-393; the sequence is RLVLSRTSGL…SSSEYRHGSM (306 aa). N-linked (GlcNAc...) asparagine glycosylation occurs at Asn-176. A disulfide bridge links Cys-198 with Cys-216. Residues His-199 and Asp-211 each coordinate Zn(2+). Glu-245 (proton acceptor) is an active-site residue. The Zn(2+) site is built by Glu-246, Glu-272, and His-348. The helical transmembrane segment at 394–414 threads the bilayer; sequence VFFDVLGLLVIAYPSRVGSII. Over 415-451 the chain is Cytoplasmic; the sequence is NYMVVMAVVLYLGRKLLRPNHSNSNYVRDFLCGLGIT. A helical membrane pass occupies residues 452–472; it reads FISWFTSLVTVLIIAVFVSLI. At 473 to 480 the chain is on the lumenal side; that stretch reads GQSLSWYN. Residues 481-501 traverse the membrane as a helical segment; it reads YFYIAVCLYGTATVAKIILIH. Topologically, residues 502 to 515 are cytoplasmic; the sequence is TLAKRFYYVNASDL. A helical transmembrane segment spans residues 516-538; the sequence is YLGELFFDTSLFVHCGFLVALTA. Over 539–542 the chain is Lumenal; that stretch reads QGFC. A helical transmembrane segment spans residues 543-562; that stretch reads SAFMSAVWVAFPLLTKLCVY. At 563-573 the chain is on the cytoplasmic side; that stretch reads KDFKKHGAKGR. The helical transmembrane segment at 574–594 threads the bilayer; that stretch reads FIALYLLGMFIPYLYGLYLIW. Topologically, residues 595–615 are lumenal; the sequence is AVFEMFTPILGRSGSEIPPDV. The chain crosses the membrane as a helical span at residues 616-636; sequence VLASILAVCVMILSSYFITFI. Topologically, residues 637-645 are cytoplasmic; the sequence is YLVNSTKKT. The chain crosses the membrane as a helical span at residues 646–666; that stretch reads ILTLILVCAVTFLLVCSGAFF. The Lumenal portion of the chain corresponds to 667–898; the sequence is PYSSNPDSPK…WVSTYSLFVF (232 aa). Asn-724 is a glycosylation site (N-linked (GlcNAc...) asparagine).

It belongs to the peptidase M28 family. Zn(2+) is required as a cofactor. In terms of tissue distribution, widely expressed, with highest levels in ovary, kidney, hypothalamus and hippocampus. Within the ovarian follicle, expressed in granulosa cells, but not in oocytes. Present in both preantral and antral follicles, but not in atretic antral follicle.

It localises to the endoplasmic reticulum membrane. In terms of biological role, within the ovary, required for the organization of somatic cells and oocytes into discrete follicular structures. The chain is Endoplasmic reticulum metallopeptidase 1 from Rattus norvegicus (Rat).